We begin with the raw amino-acid sequence, 183 residues long: Large ribosomal subunit protein uL22 (183 aa).

Residues 163-183 are disordered; that stretch reads KTAAKKQSAKKLKKQKMMYRE. Residues 165–183 show a composition bias toward basic residues; it reads AAKKQSAKKLKKQKMMYRE.

The protein belongs to the universal ribosomal protein uL22 family.

This chain is Large ribosomal subunit protein uL22 (rpl-17), found in Pectinaria gouldii (Trumpet worm).